We begin with the raw amino-acid sequence, 219 residues long: UPF0173 metal-dependent hydrolase Mhun_1705 (219 aa).

This sequence belongs to the UPF0173 family.

The protein is UPF0173 metal-dependent hydrolase Mhun_1705 of Methanospirillum hungatei JF-1 (strain ATCC 27890 / DSM 864 / NBRC 100397 / JF-1).